The chain runs to 602 residues: Glutathione-regulated potassium-efflux system protein KefB (602 aa).

The next 13 membrane-spanning stretches (helical) occupy residues Thr4 to Ala24, Ile29 to Phe49, Glu55 to Leu75, Ile87 to Tyr107, Ala115 to Met135, Val152 to Gly172, Val181 to Leu201, Tyr207 to Gly227, Leu230 to Leu250, Ile261 to Ala281, Leu296 to Leu318, Phe326 to Ser346, and Ala356 to Ile376. The 120-residue stretch at Asp400–Thr519 folds into the RCK N-terminal domain.

Belongs to the monovalent cation:proton antiporter 2 (CPA2) transporter (TC 2.A.37) family. KefB subfamily. As to quaternary structure, interacts with the regulatory subunit KefG.

The protein resides in the cell inner membrane. Pore-forming subunit of a potassium efflux system that confers protection against electrophiles. Catalyzes K(+)/H(+) antiport. The protein is Glutathione-regulated potassium-efflux system protein KefB of Yersinia pestis bv. Antiqua (strain Antiqua).